Here is a 985-residue protein sequence, read N- to C-terminus: Lateral signaling target protein 2 homolog (985 aa).

Disordered stretches follow at residues 310 to 453 (PLGS…ETDE), 498 to 520 (EYGA…PSTS), 533 to 640 (LRLP…SSLS), and 747 to 892 (DNVF…TTTA). 3 stretches are compositionally biased toward low complexity: residues 327-348 (HPTT…TNTH), 384-393 (SLSPNSTPTA), and 401-422 (PSHS…PADW). A compositionally biased stretch (acidic residues) spans 423–453 (SDGDDEDEEDDDDDIEVEEEELDSTDDETDE). Residues S537 and S538 each carry the phosphoserine modification. 2 stretches are compositionally biased toward basic residues: residues 563–589 (VYRH…HHQH) and 596–607 (HPHRTTRSGRKR). Composition is skewed to low complexity over residues 629–640 (ASGDTSAASSLS) and 761–770 (NGNQANASAQ). The span at 776-785 (GSIQRNNTVD) shows a compositional bias: polar residues. Phosphoserine is present on S808. The segment covering 812 to 866 (QESASTSTSSSQLHQEQQQLQIQVQRQRNNSVGSNTPSSASSTSSSSEQNSPVSA) has biased composition (low complexity). Polar residues predominate over residues 875–885 (QSNNETQMPSS). The FYVE-type zinc finger occupies 904–964 (DGKAPRCMSC…VCRECYVREV (61 aa)). The Zn(2+) site is built by C910, C913, C926, C929, C934, C937, C956, and C959.

This sequence belongs to the lst-2 family.

In terms of biological role, negative regulator of epidermal growth factor receptor (EGFR) signaling. The protein is Lateral signaling target protein 2 homolog of Drosophila ananassae (Fruit fly).